The following is a 341-amino-acid chain: Glyceraldehyde-3-phosphate dehydrogenase (341 aa).

Residues 11 to 12 and Gly-109 contribute to the NAD(+) site; that span reads TI. Position 138–140 (138–140) interacts with D-glyceraldehyde 3-phosphate; it reads SCN. The Nucleophile role is filled by Cys-139. Arg-167 lines the NAD(+) pocket. D-glyceraldehyde 3-phosphate-binding positions include Thr-169 and 192–193; that span reads HA. Gln-299 provides a ligand contact to NAD(+).

This sequence belongs to the glyceraldehyde-3-phosphate dehydrogenase family. As to quaternary structure, homotetramer.

The protein resides in the cytoplasm. It catalyses the reaction D-glyceraldehyde 3-phosphate + phosphate + NADP(+) = (2R)-3-phospho-glyceroyl phosphate + NADPH + H(+). It carries out the reaction D-glyceraldehyde 3-phosphate + phosphate + NAD(+) = (2R)-3-phospho-glyceroyl phosphate + NADH + H(+). It functions in the pathway carbohydrate degradation; glycolysis; pyruvate from D-glyceraldehyde 3-phosphate: step 1/5. The chain is Glyceraldehyde-3-phosphate dehydrogenase from Picrophilus torridus (strain ATCC 700027 / DSM 9790 / JCM 10055 / NBRC 100828 / KAW 2/3).